Consider the following 468-residue polypeptide: MATGKIVQIIGAVVDVEFPQDSVPKVYDALKVDAKEKGTLVLEVQQQLGGGVVRCIAMGTSDGLRRGLSVENTDRPIEVPVGIATLGRIMNVLGEPIDECGEIGEEQRYAIHREAPSYEEQSNETSLLETGVKVIDLICPFAKGGKIGLFGGAGVGKTVNMMELINNIALQHSGLSVFAGVGERTREGNDFYFEMQEAGVVNLENPSESKVAMVYGQMNEPPGNRLRVALTGLTMAERFRDEGRDVLLFIDNIYRYTLAGTEVSALLGRMPSAVGYQPTLAEEMGVLQERITSTKSGSITSVQAVYVPADDLTDPSPATTFAHLDATVVLSRQIASLGLYPAIDPLDSTSRMLDPLVVGQEHYDIARGVQSLLQRYKELKDIIAILGMDELSENDKQAVSRARKIERFLTQPYHVAEVFTGDPGIYVALKDTLRSFKGLLAGEYDDIPEQAFMYCGAIEDVLEKAKKL.

151–158 (GGAGVGKT) contacts ATP.

The protein belongs to the ATPase alpha/beta chains family. F-type ATPases have 2 components, CF(1) - the catalytic core - and CF(0) - the membrane proton channel. CF(1) has five subunits: alpha(3), beta(3), gamma(1), delta(1), epsilon(1). CF(0) has three main subunits: a(1), b(2) and c(9-12). The alpha and beta chains form an alternating ring which encloses part of the gamma chain. CF(1) is attached to CF(0) by a central stalk formed by the gamma and epsilon chains, while a peripheral stalk is formed by the delta and b chains.

Its subcellular location is the cell inner membrane. The enzyme catalyses ATP + H2O + 4 H(+)(in) = ADP + phosphate + 5 H(+)(out). Produces ATP from ADP in the presence of a proton gradient across the membrane. The catalytic sites are hosted primarily by the beta subunits. The sequence is that of ATP synthase subunit beta 1 from Photobacterium profundum (strain SS9).